We begin with the raw amino-acid sequence, 255 residues long: Methionine aminopeptidase (255 aa).

Position 76 (His76) interacts with substrate. A divalent metal cation-binding residues include Asp93, Asp104, and His167. Residue His174 participates in substrate binding. A divalent metal cation is bound by residues Glu201 and Glu232.

The protein belongs to the peptidase M24A family. Methionine aminopeptidase type 1 subfamily. As to quaternary structure, monomer. The cofactor is Co(2+). Requires Zn(2+) as cofactor. Mn(2+) serves as cofactor. Fe(2+) is required as a cofactor.

It carries out the reaction Release of N-terminal amino acids, preferentially methionine, from peptides and arylamides.. Functionally, removes the N-terminal methionine from nascent proteins. The N-terminal methionine is often cleaved when the second residue in the primary sequence is small and uncharged (Met-Ala-, Cys, Gly, Pro, Ser, Thr, or Val). Requires deformylation of the N(alpha)-formylated initiator methionine before it can be hydrolyzed. The protein is Methionine aminopeptidase of Treponema pallidum (strain Nichols).